The following is a 44-amino-acid chain: 2S seed storage albumin protein (44 aa).

Intrachain disulfides connect Cys7–Cys42 and Cys19–Cys31.

The protein belongs to the 2S seed storage albumins family. In terms of assembly, the mature protein consists of a small and a large chain linked by 2 disulfide bonds.

Its function is as follows. This is a 2S seed storage protein. Has antifungal activity. Inhibits spore germination in H.sativum (IC(50)=62.5 ug/ml) and P.betae (IC(50)=62.5 ug/ml). Inhibits growth of H.sativum, V.albo-atrum and P.infestans. The sequence is that of 2S seed storage albumin protein from Taraxacum officinale (Common dandelion).